Consider the following 309-residue polypeptide: Olfactory receptor 6C4 (309 aa).

Topologically, residues 1–23 are extracellular; it reads MKNRTMFGEFILLGLTNQPELQV. Residue Asn3 is glycosylated (N-linked (GlcNAc...) asparagine). The chain crosses the membrane as a helical span at residues 24–44; sequence MIFIFLFLTYMLSILGNLTII. At 45 to 52 the chain is on the cytoplasmic side; the sequence is TLTLLDPH. A helical transmembrane segment spans residues 53 to 73; sequence LQTPMYFFLRNFSFLEISFTS. Residues 74–97 lie on the Extracellular side of the membrane; that stretch reads IFIPRFLTSMTTGNKVISFAGCLT. An intrachain disulfide couples Cys95 to Cys187. Residues 98–118 form a helical membrane-spanning segment; sequence QYFFAIFLGATEFYLLASMSY. Over 119 to 137 the chain is Cytoplasmic; the sequence is DRYVAICKPLHYLTIMSSR. Residues 138–158 form a helical membrane-spanning segment; that stretch reads VCIQLVFCSWLGGFLAILPPI. The Extracellular portion of the chain corresponds to 159 to 195; the sequence is ILMTQVDFCVSNILNHYYCDYGPLVELACSDTSLLEL. The chain crosses the membrane as a helical span at residues 196–215; sequence MVILLAVVTLMVTLVLVTLS. Topologically, residues 216–235 are cytoplasmic; sequence YTYIIRTILRIPSAQQRTKA. Residues 236-256 form a helical membrane-spanning segment; sequence FSTCSSHMIVISLSYGSCMFM. Over 257–269 the chain is Extracellular; the sequence is YINPSAKEGGAFN. The chain crosses the membrane as a helical span at residues 270-290; sequence KGIAVLITSVTPLLNPFIYTL. Residues 291-309 are Cytoplasmic-facing; the sequence is RNQQVKQAFKDSVKKIVKL.

Belongs to the G-protein coupled receptor 1 family.

Its subcellular location is the cell membrane. In terms of biological role, odorant receptor. This chain is Olfactory receptor 6C4 (OR6C4), found in Homo sapiens (Human).